Reading from the N-terminus, the 494-residue chain is UPF0164 protein TP_0859/TP_0860 (494 aa).

Residues 1 to 44 form the signal peptide; it reads MVRRPCVSAAPVRVGGRLVFGFARVGSRGLCLGALLLSPRIVLA.

Belongs to the UPF0164 family.

The polypeptide is UPF0164 protein TP_0859/TP_0860 (Treponema pallidum (strain Nichols)).